The sequence spans 244 residues: DNA repair protein RecO (244 aa).

It belongs to the RecO family.

Functionally, involved in DNA repair and RecF pathway recombination. The protein is DNA repair protein RecO of Caldicellulosiruptor bescii (strain ATCC BAA-1888 / DSM 6725 / KCTC 15123 / Z-1320) (Anaerocellum thermophilum).